Consider the following 229-residue polypeptide: 7-cyano-7-deazaguanine synthase (229 aa).

ATP is bound at residue 15-25 (LSGGLDSATVV). Zn(2+) contacts are provided by C194, C204, C207, and C210.

Belongs to the QueC family. Zn(2+) is required as a cofactor.

It carries out the reaction 7-carboxy-7-deazaguanine + NH4(+) + ATP = 7-cyano-7-deazaguanine + ADP + phosphate + H2O + H(+). The protein operates within purine metabolism; 7-cyano-7-deazaguanine biosynthesis. Catalyzes the ATP-dependent conversion of 7-carboxy-7-deazaguanine (CDG) to 7-cyano-7-deazaguanine (preQ(0)). The protein is 7-cyano-7-deazaguanine synthase of Pseudomonas syringae pv. syringae (strain B728a).